A 215-amino-acid chain; its full sequence is Adenylate kinase (215 aa).

10-15 (GAGKGT) is an ATP binding site. The tract at residues 30 to 59 (STGDILRANVRDGTKLGKEAKGYMDKGELV) is NMP. AMP contacts are provided by residues Thr31, Arg36, 57-59 (ELV), 85-88 (GYPR), and Gln92. The tract at residues 126–162 (GRYVCTCGESYHMKFNPPKKENVCDACGADLYQRDDD) is LID. Residue Arg127 coordinates ATP. Zn(2+) is bound by residues Cys130 and Cys132. 135-136 (SY) lines the ATP pocket. Residues Cys149 and Cys152 each contribute to the Zn(2+) site. Arg159 and Arg170 together coordinate AMP. ATP is bound at residue Gly198.

The protein belongs to the adenylate kinase family. Monomer.

The protein resides in the cytoplasm. It catalyses the reaction AMP + ATP = 2 ADP. It functions in the pathway purine metabolism; AMP biosynthesis via salvage pathway; AMP from ADP: step 1/1. Catalyzes the reversible transfer of the terminal phosphate group between ATP and AMP. Plays an important role in cellular energy homeostasis and in adenine nucleotide metabolism. This Methanococcoides burtonii (strain DSM 6242 / NBRC 107633 / OCM 468 / ACE-M) protein is Adenylate kinase.